The following is a 296-amino-acid chain: 33 kDa chaperonin (296 aa).

2 disulfides stabilise this stretch: C233-C235 and C267-C270.

The protein belongs to the HSP33 family. In terms of processing, under oxidizing conditions two disulfide bonds are formed involving the reactive cysteines. Under reducing conditions zinc is bound to the reactive cysteines and the protein is inactive.

The protein resides in the cytoplasm. Redox regulated molecular chaperone. Protects both thermally unfolding and oxidatively damaged proteins from irreversible aggregation. Plays an important role in the bacterial defense system toward oxidative stress. The polypeptide is 33 kDa chaperonin (Actinobacillus pleuropneumoniae serotype 7 (strain AP76)).